The chain runs to 231 residues: MLEQLKETVFKANLYLPKYQLVTFTWGNVSGIDREKGLVVIKPSGVEYFEMKSKDMVVVDLEGNIVEGDLKPSSDTPTHLALYRAFDKVGGIVHTHSVWATAWAQAGKEIPAYGTTHADYFHGTIPCTRPMTETEILGDYEKETGNVIVETFRNKDPMSIPGVLVHSHAPFVWGKDPMEAVHHAVVLEEVAKMAQKTLSISERTLPMDSVLLDRHFYRKHGQAAYYGQEKR.

Residues 27 to 28 (GN), 44 to 45 (SG), and 73 to 74 (SS) contribute to the substrate site. Residues Asp-75, His-94, and His-96 each coordinate Zn(2+). Asp-119 functions as the Proton donor/acceptor in the catalytic mechanism. Position 168 (His-168) interacts with Zn(2+). The Proton donor/acceptor role is filled by Tyr-226.

The protein belongs to the aldolase class II family. AraD/FucA subfamily. Zn(2+) serves as cofactor.

The catalysed reaction is L-ribulose 5-phosphate = D-xylulose 5-phosphate. The protein operates within carbohydrate degradation; L-arabinose degradation via L-ribulose; D-xylulose 5-phosphate from L-arabinose (bacterial route): step 3/3. Involved in the degradation of L-arabinose. Catalyzes the interconversion of L-ribulose 5-phosphate (LRu5P) and D-xylulose 5-phosphate (D-Xu5P) via a retroaldol/aldol mechanism (carbon-carbon bond cleavage analogous to a class II aldolase reaction). This chain is L-ribulose-5-phosphate 4-epimerase (araD), found in Halalkalibacterium halodurans (strain ATCC BAA-125 / DSM 18197 / FERM 7344 / JCM 9153 / C-125) (Bacillus halodurans).